A 617-amino-acid chain; its full sequence is Probable Xaa-Pro aminopeptidase P (617 aa).

Residues Asp-414, Asp-425, Glu-523, and Glu-537 each contribute to the Mn(2+) site.

It belongs to the peptidase M24B family. Requires Mn(2+) as cofactor.

It catalyses the reaction Release of any N-terminal amino acid, including proline, that is linked to proline, even from a dipeptide or tripeptide.. Catalyzes the removal of a penultimate prolyl residue from the N-termini of peptides. In Blastomyces gilchristii (strain SLH14081) (Blastomyces dermatitidis), this protein is Probable Xaa-Pro aminopeptidase P (AMPP).